Here is an 875-residue protein sequence, read N- to C-terminus: Leucine--tRNA ligase (875 aa).

Positions 1-20 (MPSAGSVNAANPAVDTSAQT) are enriched in polar residues. Residues 1–22 (MPSAGSVNAANPAVDTSAQTGR) form a disordered region. The 'HIGH' region signature appears at 60-70 (PYPSGSLHMGH). Positions 634–638 (KMSKS) match the 'KMSKS' region motif. Position 637 (Lys-637) interacts with ATP.

The protein belongs to the class-I aminoacyl-tRNA synthetase family.

It localises to the cytoplasm. The enzyme catalyses tRNA(Leu) + L-leucine + ATP = L-leucyl-tRNA(Leu) + AMP + diphosphate. The polypeptide is Leucine--tRNA ligase (Synechococcus sp. (strain CC9605)).